Consider the following 215-residue polypeptide: MRVILLGAPGAGKGTQAKFITEKFGIPQVSTGDMLRAAVKAETELGLKAKSVMDSGGLVSDDLIIGLIKDRLAEPDCANGVLFDGFPRTIPQAEALLNAGLEIDHVLEIAVDDEEIVKRMSGRRVHEGSGRIYHTIFNPPKVEGIDDVTGEPLLQRKDDVEETVRHRLSVYHAQTKPLVEFYSKLEAKNGKPKCSHIPGVGSVEDITAKVLKALS.

ATP is bound at residue 10–15 (GAGKGT). The segment at 30 to 59 (STGDMLRAAVKAETELGLKAKSVMDSGGLV) is NMP. AMP-binding positions include Thr31, Arg36, 57 to 59 (GLV), 85 to 88 (GFPR), and Gln92. Residues 122–159 (GRRVHEGSGRIYHTIFNPPKVEGIDDVTGEPLLQRKDD) are LID. ATP contacts are provided by residues Arg123 and 132-133 (IY). AMP contacts are provided by Arg156 and Arg167. Gly201 contacts ATP.

The protein belongs to the adenylate kinase family. In terms of assembly, monomer.

It localises to the cytoplasm. The catalysed reaction is AMP + ATP = 2 ADP. It participates in purine metabolism; AMP biosynthesis via salvage pathway; AMP from ADP: step 1/1. Catalyzes the reversible transfer of the terminal phosphate group between ATP and AMP. Plays an important role in cellular energy homeostasis and in adenine nucleotide metabolism. The chain is Adenylate kinase from Pseudomonas syringae pv. syringae (strain B728a).